We begin with the raw amino-acid sequence, 228 residues long: Cytochrome c oxidase subunit 2 (228 aa).

Residues 1–26 (MATWANLGLQDSSSPLMEQLNFFHDH) lie on the Mitochondrial intermembrane side of the membrane. A helical transmembrane segment spans residues 27–47 (TLLILTMITILVGYIMGMLMF). Residues 48 to 60 (NQFTNRYLLHGQT) lie on the Mitochondrial matrix side of the membrane. Residues 61-81 (IEIIWTVLPAIILMFIALPSL) form a helical membrane-spanning segment. Topologically, residues 82–228 (RLLYLMDEIN…FIKWITNMTN (147 aa)) are mitochondrial intermembrane. Residues H161, C196, E198, C200, H204, and M207 each coordinate Cu cation. E198 is a Mg(2+) binding site.

This sequence belongs to the cytochrome c oxidase subunit 2 family. In terms of assembly, component of the cytochrome c oxidase (complex IV, CIV), a multisubunit enzyme composed of a catalytic core of 3 subunits and several supernumerary subunits. The complex exists as a monomer or a dimer and forms supercomplexes (SCs) in the inner mitochondrial membrane with ubiquinol-cytochrome c oxidoreductase (cytochrome b-c1 complex, complex III, CIII). It depends on Cu cation as a cofactor.

It is found in the mitochondrion inner membrane. The catalysed reaction is 4 Fe(II)-[cytochrome c] + O2 + 8 H(+)(in) = 4 Fe(III)-[cytochrome c] + 2 H2O + 4 H(+)(out). Functionally, component of the cytochrome c oxidase, the last enzyme in the mitochondrial electron transport chain which drives oxidative phosphorylation. The respiratory chain contains 3 multisubunit complexes succinate dehydrogenase (complex II, CII), ubiquinol-cytochrome c oxidoreductase (cytochrome b-c1 complex, complex III, CIII) and cytochrome c oxidase (complex IV, CIV), that cooperate to transfer electrons derived from NADH and succinate to molecular oxygen, creating an electrochemical gradient over the inner membrane that drives transmembrane transport and the ATP synthase. Cytochrome c oxidase is the component of the respiratory chain that catalyzes the reduction of oxygen to water. Electrons originating from reduced cytochrome c in the intermembrane space (IMS) are transferred via the dinuclear copper A center (CU(A)) of subunit 2 and heme A of subunit 1 to the active site in subunit 1, a binuclear center (BNC) formed by heme A3 and copper B (CU(B)). The BNC reduces molecular oxygen to 2 water molecules using 4 electrons from cytochrome c in the IMS and 4 protons from the mitochondrial matrix. In Anopheles quadrimaculatus (Common malaria mosquito), this protein is Cytochrome c oxidase subunit 2 (COXII).